The following is a 75-amino-acid chain: uncharacterized protein (75 aa).

The SpoVT-AbrB domain maps to 3–45; that stretch reads TTVFLSNRSQAVRLPKAVALPENVKRVEVIAVGRTRIITPAGE.

The protein belongs to the VapB family.

This is an uncharacterized protein from Escherichia coli (strain K12).